Reading from the N-terminus, the 351-residue chain is MGAALALLGDLVASVSEAAAATGFSVAEIAAGEAAAAIEVQIASLATVEGITSTSEAIAAIGLTPQTYAVIAGAPGAIAGFAALIQTVSGISSLAQVGYRFFSDWDHKVSTVGLYQQSGMALELFNPDEYYDILFPGVNTFVNNIQYLDPRHWGPSLFATISQALWHVIRDDIPSITSQELQRRTERFFRDSLARFLEETTWTIVNAPINFYNYIQQYYSDLSPIRPSMVRQVAEREGTRVHFGHTYSIDDADSIEEVTQRMDLRNQQSVHSGEFIEKTIAPGGANQRTAPQWMLPLLLGLYGTVTPALEAYEDGPNQKKRRVSRGSSQKAKGTRASAKTTNKRRSRSSRS.

Glycine 2 carries the N-myristoyl glycine; by host lipid modification. Positions 272–307 (SGEFIEKTIAPGGANQRTAPQWMLPLLLGLYGTVTP) are D1. The helical transmembrane segment at 289 to 309 (TAPQWMLPLLLGLYGTVTPAL) threads the bilayer. Residues 312 to 351 (YEDGPNQKKRRVSRGSSQKAKGTRASAKTTNKRRSRSSRS) form a disordered region. Positions 312–351 (YEDGPNQKKRRVSRGSSQKAKGTRASAKTTNKRRSRSSRS) are DNA-binding. The Nuclear localization signal motif lies at 315 to 323 (GPNQKKRRV). Residues 341 to 351 (TNKRRSRSSRS) show a composition bias toward basic residues.

It belongs to the polyomaviruses capsid protein VP2 family. In terms of assembly, forms homooligomers, and heterooligomers with VP3 in the endoplasmic reticulum membrane. Interacts (via D1 domain) with VP1. Forms homooligomers, and heterooligomers with VP2 in the endoplasmic reticulum membrane. Interacts (via D1 domain) with VP1.

It localises to the virion. Its subcellular location is the host nucleus. The protein localises to the host endoplasmic reticulum. The protein resides in the host endoplasmic reticulum membrane. In terms of biological role, structural protein that resides within the core of the capsid surrounded by 72 VP1 pentamers. Participates in host cell receptor binding together with VP1. Following virus endocytosis and trafficking to the endoplasmic reticulum, VP2 and VP3 form oligomers and integrate into the endoplasmic reticulum membrane. Heterooligomer VP2-VP3 may create a viroporin for transporting the viral genome across the endoplasmic reticulum membrane to the cytoplasm. Nuclear entry of the viral DNA involves the selective exposure and importin recognition of VP2 or VP3 nuclear localization signal (shared C-terminus). Plays a role in virion assembly within the nucleus in particular through a DNA-binding domain located in the C-terminal region. An N-terminal myristoylation suggests a scaffold function for virion assembly. Functionally, structural protein that resides within the core of the capsid surrounded by 72 VP1 pentamers. Following virus endocytosis and trafficking to the endoplasmic reticulum, VP2 and VP3 form oligomers and integrate into the endoplasmic reticulum membrane. Heterooligomer VP2-VP3 may create a viroporin for transporting the viral genome across the endoplasmic reticulum membrane to the cytoplasm. Nuclear entry of the viral DNA involves the selective exposure and importin recognition of VP2 or VP3 nuclear localization signal (shared C-terminus). Plays a role in virion assembly within the nucleus. May participate in host cell lysis when associated with VP4. Viroporin inducing perforation of cellular membranes to trigger virus progeny release. Forms pores of 3 nm inner diameter. VP4 is expressed about 24 hours after the late structural proteins and is not incorporated into the mature virion. This chain is Minor capsid protein VP2, found in Homo sapiens (Human).